The following is a 160-amino-acid chain: Small ribosomal subunit protein bS16 (160 aa).

The disordered stretch occupies residues 115 to 139 (GGPTTEATRPKKKVSAKKAAKAVES). Positions 124-134 (PKKKVSAKKAA) are enriched in basic residues.

It belongs to the bacterial ribosomal protein bS16 family.

The sequence is that of Small ribosomal subunit protein bS16 from Mycobacterium leprae (strain Br4923).